A 189-amino-acid polypeptide reads, in one-letter code: Nucleoside diphosphate kinase 6 (189 aa).

ATP contacts are provided by Lys-19, Phe-68, Arg-96, Thr-102, Arg-116, and Asn-126. The active-site Pros-phosphohistidine intermediate is His-129.

Belongs to the NDK family. Requires Mg(2+) as cofactor.

The enzyme catalyses a 2'-deoxyribonucleoside 5'-diphosphate + ATP = a 2'-deoxyribonucleoside 5'-triphosphate + ADP. It catalyses the reaction a ribonucleoside 5'-diphosphate + ATP = a ribonucleoside 5'-triphosphate + ADP. Functionally, major role in the synthesis of nucleoside triphosphates other than ATP. The ATP gamma phosphate is transferred to the NDP beta phosphate via a ping-pong mechanism, using a phosphorylated active-site intermediate. This is Nucleoside diphosphate kinase 6 (Nme6) from Mus musculus (Mouse).